The primary structure comprises 808 residues: Dynamin-related protein 3A (808 aa).

The interval 1 to 31 (MTIEEVSGETPPSTPPSSSTPSPSSSTTNAA) is disordered. Over residues 16–28 (PSSSTPSPSSSTT) the composition is skewed to low complexity. The region spanning 56-330 (TIALPQVVVV…LVQHIKVLLP (275 aa)) is the Dynamin-type G domain. The G1 motif stretch occupies residues 66 to 73 (GSQSSGKS). 66–73 (GSQSSGKS) serves as a coordination point for GTP. The segment at 92-94 (CTR) is G2 motif. The interval 172–175 (DLPG) is G3 motif. GTP contacts are provided by residues 172-176 (DLPGI) and 241-244 (TKLD). The G4 motif stretch occupies residues 241 to 244 (TKLD). The segment at 271 to 274 (VNRC) is G5 motif. A disordered region spans residues 548–578 (IPHPVARPKDTVEPDRTSSSTSQVKSRSFLG). The segment covering 554–563 (RPKDTVEPDR) has biased composition (basic and acidic residues). Residues 564–575 (TSSSTSQVKSRS) are compositionally biased toward low complexity. The region spanning 670–761 (IQITKLLLRS…TLDELPLEAD (92 aa)) is the GED domain. Positions 774-808 (LTSSKYSTSSSYSASPSTTRRSRRAGDQHQNGYGF) are disordered. Positions 775–792 (TSSKYSTSSSYSASPSTT) are enriched in low complexity.

Belongs to the TRAFAC class dynamin-like GTPase superfamily. Dynamin/Fzo/YdjA family. Homooligomer. Interacts with ARC5 on peroxisomes and ELM1 on mitochondria. As to expression, ubiquitous. Preferentially expressed in flowers.

Its subcellular location is the mitochondrion. The protein localises to the peroxisome. Its function is as follows. Involved in the control of mitochondrial and peroxisomal division and morphology. In association with PEX11C, PEX11D, PEX11E and FIS1B, is involved in cell cycle-associated constitutive self-replication of preexisting peroxisomes. The polypeptide is Dynamin-related protein 3A (DRP3A) (Arabidopsis thaliana (Mouse-ear cress)).